We begin with the raw amino-acid sequence, 520 residues long: MGYVSGILLVLIGLLAGVGLGVLLRQYWLEKRNRQLQEQARNILTDARKEAETIKKEAILQAKDSLFQMKAEFERETKESRKEFQNLEKRILQKEENLDKKSEALDKREGVIGKREKVLQQQEKELEENTRELHMLIEEQRKKLESLSGISAQQAKEMLARAIENEARHDAALMVKKIETEARETADRKAKNIISLAIQRYAGDYVAEKTVSVVNLPNEEMKGRIIGREGRNIRAIEASTGVDLIIDDTPEAVILSGFNPVRREVARVSLERLISDGRIHPARIEEIVEKVNIEIENAIKESGEQAAFDVGVHGIHPELIKLLGKLKYRTSYAQNVLQHSREVAFLCGIMAAELGINEKQAKRAGLLHDIGKAIDHEMEGPHATLGADLTRRYGEAPPIIHAIAAHHEDVPAEDVLAILVQAADALSGARPGARKELLETYVKRLEDLERIAGSFPGINKAYAIQAGRELRIIVESGQVNDADVVLLSRDIAKKIEGELTYPGQIKVTVIRETRAVEYAK.

The helical transmembrane segment at 4–24 (VSGILLVLIGLLAGVGLGVLL) threads the bilayer. Positions 210 to 270 (TVSVVNLPNE…VRREVARVSL (61 aa)) constitute a KH domain. The HD domain maps to 336–429 (VLQHSREVAF…VQAADALSGA (94 aa)).

It belongs to the RNase Y family.

Its subcellular location is the cell membrane. In terms of biological role, endoribonuclease that initiates mRNA decay. In Syntrophobacter fumaroxidans (strain DSM 10017 / MPOB), this protein is Ribonuclease Y.